Consider the following 233-residue polypeptide: Membrane steroid-binding protein 2 (233 aa).

The helical transmembrane segment at 23–43 threads the bilayer; it reads AFFTVLALAFAVYQVVSGFFV. The Cytochrome b5 heme-binding domain occupies 70 to 167; sequence EITEEELKLY…SKYVKVGTIQ (98 aa). The steroid-binding stretch occupies residues 70–167; the sequence is EITEEELKLY…SKYVKVGTIQ (98 aa). 2 stretches are compositionally biased toward basic and acidic residues: residues 169-181 and 202-224; these read KDGE…EPSE and THDE…KDVA. The interval 169 to 233 is disordered; it reads KDGEGKESSE…ATDDDDAAKE (65 aa). Threonine 225 carries the post-translational modification Phosphothreonine.

Belongs to the cytochrome b5 family. MAPR subfamily.

The protein resides in the cell membrane. In Arabidopsis thaliana (Mouse-ear cress), this protein is Membrane steroid-binding protein 2 (MSBP2).